Consider the following 234-residue polypeptide: UPF0173 metal-dependent hydrolase RL2074 (234 aa).

It belongs to the UPF0173 family.

The chain is UPF0173 metal-dependent hydrolase RL2074 from Rhizobium johnstonii (strain DSM 114642 / LMG 32736 / 3841) (Rhizobium leguminosarum bv. viciae).